The primary structure comprises 688 residues: Elongation factor G (688 aa).

Residues 8–282 (INFRNFGIMA…AVVDFLPSPV (275 aa)) enclose the tr-type G domain. GTP is bound by residues 17–24 (AHIDAGKT), 81–85 (DTPGH), and 135–138 (NKMD).

The protein belongs to the TRAFAC class translation factor GTPase superfamily. Classic translation factor GTPase family. EF-G/EF-2 subfamily.

It is found in the cytoplasm. Functionally, catalyzes the GTP-dependent ribosomal translocation step during translation elongation. During this step, the ribosome changes from the pre-translocational (PRE) to the post-translocational (POST) state as the newly formed A-site-bound peptidyl-tRNA and P-site-bound deacylated tRNA move to the P and E sites, respectively. Catalyzes the coordinated movement of the two tRNA molecules, the mRNA and conformational changes in the ribosome. The protein is Elongation factor G (fusA) of Mycoplasma pneumoniae (strain ATCC 29342 / M129 / Subtype 1) (Mycoplasmoides pneumoniae).